The following is a 789-amino-acid chain: Ribonucleoside-diphosphate reductase large subunit (789 aa).

Substrate contacts are provided by residues threonine 207, serine 222–cysteine 223, glycine 253, asparagine 435–glutamate 439, and proline 620–serine 624. Cysteine 223 and cysteine 452 form a disulfide bridge. Asparagine 435 (proton acceptor) is an active-site residue. Cysteine 437 functions as the Cysteine radical intermediate in the catalytic mechanism. Residue glutamate 439 is the Proton acceptor of the active site.

Belongs to the ribonucleoside diphosphate reductase large chain family. In terms of assembly, heterotetramer composed of a homodimer of the large subunit (R1) and a homodimer of the small subunit (R2). Larger multisubunit protein complex are also active, composed of (R1)n(R2)n.

The catalysed reaction is a 2'-deoxyribonucleoside 5'-diphosphate + [thioredoxin]-disulfide + H2O = a ribonucleoside 5'-diphosphate + [thioredoxin]-dithiol. Ribonucleoside-diphosphate reductase holoenzyme provides the precursors necessary for viral DNA synthesis. Allows virus growth in non-dividing cells, as well as reactivation from latency in infected hosts. Catalyzes the biosynthesis of deoxyribonucleotides from the corresponding ribonucleotides. This is Ribonucleoside-diphosphate reductase large subunit from Equus caballus (Horse).